The sequence spans 403 residues: Tryptophan synthase beta chain (403 aa).

Lys90 carries the N6-(pyridoxal phosphate)lysine modification.

Belongs to the TrpB family. Tetramer of two alpha and two beta chains. The cofactor is pyridoxal 5'-phosphate.

The enzyme catalyses (1S,2R)-1-C-(indol-3-yl)glycerol 3-phosphate + L-serine = D-glyceraldehyde 3-phosphate + L-tryptophan + H2O. It participates in amino-acid biosynthesis; L-tryptophan biosynthesis; L-tryptophan from chorismate: step 5/5. In terms of biological role, the beta subunit is responsible for the synthesis of L-tryptophan from indole and L-serine. This Leifsonia xyli subsp. xyli (strain CTCB07) protein is Tryptophan synthase beta chain.